Consider the following 324-residue polypeptide: Glycerol-3-phosphate dehydrogenase [NAD(P)+] (324 aa).

Residues Ser-10, Phe-11, Arg-31, and Lys-106 each contribute to the NADPH site. 3 residues coordinate sn-glycerol 3-phosphate: Lys-106, Gly-134, and Ser-136. Residue Ala-138 coordinates NADPH. Lys-189, Asp-244, Ser-254, Arg-255, and Asn-256 together coordinate sn-glycerol 3-phosphate. The Proton acceptor role is filled by Lys-189. Arg-255 is a binding site for NADPH. 2 residues coordinate NADPH: Ile-279 and Glu-281.

It belongs to the NAD-dependent glycerol-3-phosphate dehydrogenase family.

The protein resides in the cytoplasm. The enzyme catalyses sn-glycerol 3-phosphate + NAD(+) = dihydroxyacetone phosphate + NADH + H(+). It catalyses the reaction sn-glycerol 3-phosphate + NADP(+) = dihydroxyacetone phosphate + NADPH + H(+). The protein operates within membrane lipid metabolism; glycerophospholipid metabolism. Functionally, catalyzes the reduction of the glycolytic intermediate dihydroxyacetone phosphate (DHAP) to sn-glycerol 3-phosphate (G3P), the key precursor for phospholipid synthesis. This is Glycerol-3-phosphate dehydrogenase [NAD(P)+] from Ehrlichia canis (strain Jake).